A 156-amino-acid chain; its full sequence is Small ribosomal subunit protein uS7 (156 aa).

It belongs to the universal ribosomal protein uS7 family. In terms of assembly, part of the 30S ribosomal subunit. Contacts proteins S9 and S11.

In terms of biological role, one of the primary rRNA binding proteins, it binds directly to 16S rRNA where it nucleates assembly of the head domain of the 30S subunit. Is located at the subunit interface close to the decoding center, probably blocks exit of the E-site tRNA. The protein is Small ribosomal subunit protein uS7 of Clostridium botulinum (strain Alaska E43 / Type E3).